The chain runs to 425 residues: RNA-binding protein L (425 aa).

The segment covering 1–20 (MQQPPSQPQPGMGGPPPPPQ) has biased composition (pro residues). A disordered region spans residues 1–82 (MQQPPSQPQP…AAPPPQAMPA (82 aa)). Residues 21-31 (GAAGQPPQWGA) are compositionally biased toward low complexity. Positions 32-80 (IPPPMPPHQYGAPPPQQPPAMWGQPPPQAHYGQVPPPQPYYAAPPPQAM) are enriched in pro residues. RRM domains are found at residues 90 to 170 (KTLW…WASA), 180 to 259 (YTIF…PAAN), and 284 to 356 (TTIF…WGRS).

It belongs to the polyadenylate-binding RBP45 family. Interacts with RBP-P. Interacts with RAB5A.

It is found in the nucleus. It localises to the cytoplasm. Functionally, RNA-binding protein that binds to a cis-localization element or zipcode, within the 5'-CDS of prolamine RNA. Binds strongly to glutelin and prolamin mRNAs, particularly to 3'-UTR and zipcode RNA. Recognizes and binds to glutelin zipcode RNA, which is required for proper mRNA localization to cisternal endoplasmic reticulum. Recognizes and binds to prolamin zipcode RNA, which is required for proper mRNA localization to the protein body endoplasmic reticulum that delimits the prolamine intracisternal inclusion granules. Required for the correct localization of glutelin and prolamine mRNA in endosperm cells during grain development. RBP-L and RBP-P form a quaternary complex with the membrane trafficking factors NSF and RAB5A. This quaternay complex carries glutelin mRNAs for active transport on endosomes to the cortical endoplasmic reticulum membrane, and enables endosome-mediated glutelin mRNA transport in endosperm cells. In Oryza sativa subsp. japonica (Rice), this protein is RNA-binding protein L.